Reading from the N-terminus, the 179-residue chain is Putative ankyrin repeat protein RF_0922 (179 aa).

ANK repeat units lie at residues 5-34 (KGCT…EQAI), 40-72 (NGST…INHV), 75-104 (NGNT…SQAI), 110-139 (NGDT…EQAI), and 145-174 (NGNT…KQAI).

This Rickettsia felis (strain ATCC VR-1525 / URRWXCal2) (Rickettsia azadi) protein is Putative ankyrin repeat protein RF_0922.